A 381-amino-acid polypeptide reads, in one-letter code: MTCCFSCLNPRTKDIRVDIDNARCNSRYQTDSSVHGSDTTGTESISGILVNGKVNSPIPGGGARSFTFKELAAATRNFREVNLLGEGGFGRVYKGRLDSGQVVAIKQLNPDGLQGNREFIVEVLMLSLLHHPNLVTLIGYCTSGDQRLLVYEYMPMGSLEDHLFDLESNQEPLSWNTRMKIAVGAARGIEYLHCTANPPVIYRDLKSANILLDKEFSPKLSDFGLAKLGPVGDRTHVSTRVMGTYGYCAPEYAMSGKLTVKSDIYCFGVVLLELITGRKAIDLGQKQGEQNLVTWSRPYLKDQKKFGHLVDPSLRGKYPRRCLNYAIAIIAMCLNEEAHYRPFIGDIVVALEYLAAQSRSHEARNVSSPSPEISRTPRRDL.

A lipid anchor (S-palmitoyl cysteine) is attached at C3. The Protein kinase domain maps to 78-354 (FREVNLLGEG…GDIVVALEYL (277 aa)). Residues 84–92 (LGEGGFGRV) and K106 each bind ATP. The active-site Proton acceptor is D204. Residues 362–381 (EARNVSSPSPEISRTPRRDL) are disordered.

This sequence belongs to the protein kinase superfamily. Ser/Thr protein kinase family. In terms of processing, palmitoylation at Cys-3 and Cys-7 are required for plasma membrane location.

It is found in the cell membrane. The enzyme catalyses L-seryl-[protein] + ATP = O-phospho-L-seryl-[protein] + ADP + H(+). It catalyses the reaction L-threonyl-[protein] + ATP = O-phospho-L-threonyl-[protein] + ADP + H(+). In terms of biological role, may be involved in plant defense signaling. This chain is Probable serine/threonine-protein kinase PBL21, found in Arabidopsis thaliana (Mouse-ear cress).